A 325-amino-acid polypeptide reads, in one-letter code: Ribosomal RNA small subunit methyltransferase H (325 aa).

Residues 45–47 (GGH), Asp-65, Tyr-92, Asp-113, and Gln-120 contribute to the S-adenosyl-L-methionine site.

Belongs to the methyltransferase superfamily. RsmH family.

It is found in the cytoplasm. The enzyme catalyses cytidine(1402) in 16S rRNA + S-adenosyl-L-methionine = N(4)-methylcytidine(1402) in 16S rRNA + S-adenosyl-L-homocysteine + H(+). In terms of biological role, specifically methylates the N4 position of cytidine in position 1402 (C1402) of 16S rRNA. The polypeptide is Ribosomal RNA small subunit methyltransferase H (Oleidesulfovibrio alaskensis (strain ATCC BAA-1058 / DSM 17464 / G20) (Desulfovibrio alaskensis)).